A 170-amino-acid chain; its full sequence is Phosphopantetheine adenylyltransferase (170 aa).

Threonine 17 contributes to the substrate binding site. ATP-binding positions include 17–18 (TF) and histidine 25. Substrate-binding residues include lysine 49, leucine 81, and arginine 95. ATP is bound by residues 96 to 98 (GLR), glutamate 106, and 131 to 137 (LMYISST).

This sequence belongs to the bacterial CoaD family. Homohexamer. The cofactor is Mg(2+).

The protein localises to the cytoplasm. It catalyses the reaction (R)-4'-phosphopantetheine + ATP + H(+) = 3'-dephospho-CoA + diphosphate. The protein operates within cofactor biosynthesis; coenzyme A biosynthesis; CoA from (R)-pantothenate: step 4/5. Functionally, reversibly transfers an adenylyl group from ATP to 4'-phosphopantetheine, yielding dephospho-CoA (dPCoA) and pyrophosphate. This chain is Phosphopantetheine adenylyltransferase, found in Legionella pneumophila subsp. pneumophila (strain Philadelphia 1 / ATCC 33152 / DSM 7513).